A 499-amino-acid chain; its full sequence is Aspartyl/glutamyl-tRNA(Asn/Gln) amidotransferase subunit B (499 aa).

It belongs to the GatB/GatE family. GatB subfamily. Heterotrimer of A, B and C subunits.

It catalyses the reaction L-glutamyl-tRNA(Gln) + L-glutamine + ATP + H2O = L-glutaminyl-tRNA(Gln) + L-glutamate + ADP + phosphate + H(+). It carries out the reaction L-aspartyl-tRNA(Asn) + L-glutamine + ATP + H2O = L-asparaginyl-tRNA(Asn) + L-glutamate + ADP + phosphate + 2 H(+). Its function is as follows. Allows the formation of correctly charged Asn-tRNA(Asn) or Gln-tRNA(Gln) through the transamidation of misacylated Asp-tRNA(Asn) or Glu-tRNA(Gln) in organisms which lack either or both of asparaginyl-tRNA or glutaminyl-tRNA synthetases. The reaction takes place in the presence of glutamine and ATP through an activated phospho-Asp-tRNA(Asn) or phospho-Glu-tRNA(Gln). This chain is Aspartyl/glutamyl-tRNA(Asn/Gln) amidotransferase subunit B, found in Bartonella quintana (strain Toulouse) (Rochalimaea quintana).